Here is a 486-residue protein sequence, read N- to C-terminus: Ribosome biogenesis protein YTM1 (486 aa).

Residues 12-99 form a ubiquitin-like (UBL) domain region; that stretch reads RQLPINLFTR…ESQIDVEYVR (88 aa). WD repeat units lie at residues 212–251, 305–345, 349–388, 392–432, and 454–486; these read GHTGPISSVIASSSGKEIVTGSWDGNINLYVLPDAEPTEH, GHTG…AGAL, PFDKSALCVDQWKMNGTLATGNMDRTICLWDTRQATSLIS, PTTS…TALF, and VLGERLLAVDWNGEVLVAGGEDGEVGIWRARGE. A disordered region spans residues 249-299; that stretch reads TEHQVPADPVSYLPGQGTKKRRKLEKDQEKAPIEGLTDGDATGEGGWRRAP.

This sequence belongs to the WD repeat WDR12/YTM1 family. As to quaternary structure, component of the NOP7 complex, composed of ERB1, NOP7 and YTM1. The complex is held together by ERB1, which interacts with NOP7 via its N-terminal domain and with YTM1 via a high-affinity interaction between the seven-bladed beta-propeller domains of the 2 proteins. The NOP7 complex associates with the 66S pre-ribosome. Interacts (via UBL domain) with MDN1 (via VWFA/MIDAS domain).

Its subcellular location is the nucleus. It is found in the nucleolus. The protein localises to the nucleoplasm. Its function is as follows. Component of the NOP7 complex, which is required for maturation of the 25S and 5.8S ribosomal RNAs and formation of the 60S ribosome. The protein is Ribosome biogenesis protein YTM1 of Cryptococcus neoformans var. neoformans serotype D (strain B-3501A) (Filobasidiella neoformans).